Consider the following 452-residue polypeptide: UDP-N-acetylmuramoylalanine--D-glutamate ligase (452 aa).

Residue 119-125 (GSNGKTT) coordinates ATP.

Belongs to the MurCDEF family.

The protein localises to the cytoplasm. The enzyme catalyses UDP-N-acetyl-alpha-D-muramoyl-L-alanine + D-glutamate + ATP = UDP-N-acetyl-alpha-D-muramoyl-L-alanyl-D-glutamate + ADP + phosphate + H(+). It functions in the pathway cell wall biogenesis; peptidoglycan biosynthesis. Its function is as follows. Cell wall formation. Catalyzes the addition of glutamate to the nucleotide precursor UDP-N-acetylmuramoyl-L-alanine (UMA). The chain is UDP-N-acetylmuramoylalanine--D-glutamate ligase from Streptococcus pyogenes serotype M5 (strain Manfredo).